Here is a 97-residue protein sequence, read N- to C-terminus: U6-theraphotoxin-Hhn1a 4 (97 aa).

A signal peptide spans Met1–Ala33. Residues Ser34–Arg61 constitute a propeptide that is removed on maturation. Cystine bridges form between Cys63/Cys77, Cys70/Cys82, and Cys76/Cys89.

It belongs to the neurotoxin 10 (Hwtx-1) family. 12 (Hntx-12) subfamily. As to expression, expressed by the venom gland.

It is found in the secreted. Ion channel inhibitor. The protein is U6-theraphotoxin-Hhn1a 4 of Cyriopagopus hainanus (Chinese bird spider).